The chain runs to 669 residues: MEKCSVGGLELTEQTPALLGNMAMATSLMDIGDSFGHPACPLVSRSRNSPVEDDDDDDDVVFIESIQPPSISAPAIADQRNFIFASSKNEKPQGNYSVIPPSSRDLASQKGNISETIVIDDEEDIETNGGAEKKSSCFIEWGLPGTKNKTNDLDFSTSSLSRSKTKTGVRPFNPGRMNVAGDLFQNGEFATHHSPDSWISQSASFPSNQKQPGVDSLSPVALLRKQNFQPTAQQQLTKPAKITCANCKKPLQKGQTAYQRKGSAHLFCSTTCLSSFSHKRTQNTRSIICKKDASTKKANVILPVESSKSFQEFYSTSCLSPCENNWNLKKGVFNKSRCTICSKLAEIRHEVSVNNVTHKLCSNHCFNKYRLANGLIMNCCEHCGEYMPSKSTGNNILVIGGQQKRFCCQSCINEYKQMMETKSKKLTASENRKRNAFREENEKQLYGSSNTLLKKIEGIPEKKEKTSQLQLSVECGTDTLLIQENVNLPPSSTSTIADTFQEQLEEKNFEDSIVPVVLSADPGTWPRILNIKQRDTLVENVPPQVRNFNFPKDNTGRKFSETYYTRILPNGEKTTRSWLLYSTSKDSVFCLYCKLFGEGKNQLKNENGCKDWQHLSHILSKHEESEMHVNNSVKYSKLKSDLKKNKAIDAAEHRLYENEKNDGVLLLYT.

Glycyl lysine isopeptide (Lys-Gly) (interchain with G-Cter in SUMO2) cross-links involve residues lysine 88, lysine 91, lysine 134, lysine 149, lysine 166, and lysine 225. MYM-type zinc fingers lie at residues 265-299 (HLFCSTTCLSSFSHKRTQNTRSIICKKDASTKKAN), 311-351 (QEFY…RHEV), 358-393 (HKLCSNHCFNKYRLANGLIMNCCEHCGEYMPSKSTG), and 404-431 (KRFCCQSCINEYKQMMETKSKKLTASEN). Glycyl lysine isopeptide (Lys-Gly) (interchain with G-Cter in SUMO2) cross-links involve residues lysine 443, lysine 455, lysine 462, and lysine 552.

Interacts (via N-terminal 120 amino acid region) with ETV5 (via C-terminal).

It is found in the nucleus. Its function is as follows. Functions as a transcriptional regulator. The sequence is that of Zinc finger MYM-type protein 5 (ZMYM5) from Homo sapiens (Human).